The sequence spans 337 residues: Beta-ketoacyl-[acyl-carrier-protein] synthase III (337 aa).

Active-site residues include cysteine 119 and histidine 260. Residues 261–265 form an ACP-binding region; that stretch reads QANQR. Asparagine 290 is an active-site residue.

The protein belongs to the thiolase-like superfamily. FabH family. As to quaternary structure, homodimer.

It localises to the cytoplasm. It carries out the reaction malonyl-[ACP] + acetyl-CoA + H(+) = 3-oxobutanoyl-[ACP] + CO2 + CoA. It functions in the pathway lipid metabolism; fatty acid biosynthesis. Catalyzes the condensation reaction of fatty acid synthesis by the addition to an acyl acceptor of two carbons from malonyl-ACP. Catalyzes the first condensation reaction which initiates fatty acid synthesis and may therefore play a role in governing the total rate of fatty acid production. Possesses both acetoacetyl-ACP synthase and acetyl transacylase activities. Its substrate specificity determines the biosynthesis of branched-chain and/or straight-chain of fatty acids. The chain is Beta-ketoacyl-[acyl-carrier-protein] synthase III from Synechococcus sp. (strain WH7803).